Here is a 339-residue protein sequence, read N- to C-terminus: Dihydroorotate dehydrogenase (quinone) (339 aa).

FMN-binding positions include 64 to 68 and threonine 88; that span reads AGADK. Position 68 (lysine 68) interacts with substrate. A substrate-binding site is contributed by 113-117; the sequence is NRNGF. Positions 141 and 174 each coordinate FMN. Asparagine 174 serves as a coordination point for substrate. Serine 177 acts as the Nucleophile in catalysis. Asparagine 179 is a substrate binding site. Lysine 219 and threonine 247 together coordinate FMN. A substrate-binding site is contributed by 248 to 249; sequence NT. Residues glycine 270, glycine 299, and 320 to 321 contribute to the FMN site; that span reads YS.

This sequence belongs to the dihydroorotate dehydrogenase family. Type 2 subfamily. Monomer. It depends on FMN as a cofactor.

The protein resides in the cell membrane. It carries out the reaction (S)-dihydroorotate + a quinone = orotate + a quinol. It participates in pyrimidine metabolism; UMP biosynthesis via de novo pathway; orotate from (S)-dihydroorotate (quinone route): step 1/1. Catalyzes the conversion of dihydroorotate to orotate with quinone as electron acceptor. This Haemophilus influenzae (strain PittGG) protein is Dihydroorotate dehydrogenase (quinone).